The sequence spans 459 residues: Putative BTB/POZ domain-containing protein R541 (459 aa).

Positions 76-143 constitute a BTB domain; that stretch reads NHITINVGGK…NQKSTNIELY (68 aa).

This sequence belongs to the mimivirus BTB/WD family.

This is Putative BTB/POZ domain-containing protein R541 from Acanthamoeba polyphaga mimivirus (APMV).